We begin with the raw amino-acid sequence, 440 residues long: Frizzled/smoothened-like sans CRD protein D (440 aa).

The first 27 residues, 1 to 27, serve as a signal peptide directing secretion; sequence MFIILKFLISFFLICNFFNYNDHFASG. The Extracellular portion of the chain corresponds to 28 to 85; it reads QTLPPGFCPSPLIYRNSTNRQNDIENGYLFIGQTNCTSPCPSLIFSENEWHRVYNMSL. Asn-43, Asn-62, and Asn-82 each carry an N-linked (GlcNAc...) asparagine glycan. A helical membrane pass occupies residues 86–106; that stretch reads IAGTISMFALIFLIITYSPLV. The Cytoplasmic segment spans residues 107-110; sequence NKYN. The helical transmembrane segment at 111–131 threads the bilayer; it reads GYTRHTVGILFLFCGIFLTVT. Residues 132–162 lie on the Extracellular side of the membrane; the sequence is TDGRQLWDIDLGFEKYCPEPGRFARQSDTKC. The chain crosses the membrane as a helical span at residues 163–183; it reads LVTAIFFQYGCVTSILWWAAI. Over 184–200 the chain is Cytoplasmic; it reads SVDLWMTIRKVKISKLQ. Residues 201-221 form a helical membrane-spanning segment; sequence FITYAVILNIITLILTFAPIA. At 222–244 the chain is on the extracellular side; the sequence is SKQYGYGEAAIGCWLMDLKYQVG. Residues 245–265 form a helical membrane-spanning segment; the sequence is YFWAPVGFCLCVGCVSIVLII. The Cytoplasmic segment spans residues 266-285; sequence REIYKVSDAIKKKLLAKHLK. The helical transmembrane segment at 286–306 threads the bilayer; the sequence is PLMLIILMLSEFIYMFIFYSY. The Extracellular portion of the chain corresponds to 307 to 346; the sequence is TTSRRGHYHDVVEKYIRCLFINASNPSICEVDVSISSPAH. N-linked (GlcNAc...) asparagine glycosylation occurs at Asn-328. The helical transmembrane segment at 347 to 367 threads the bilayer; it reads FFFHFCMRLMGIEGLIFFGFT. Topologically, residues 368-440 are cytoplasmic; that stretch reads RQTKRIWLRS…IELSGVDSKN (73 aa). Residues 395-428 form a disordered region; the sequence is ISSDEKTSNSSHRTTRGCRETEFGESIEQSNDPE.

This sequence belongs to the G-protein coupled receptor Fz/Smo family.

It localises to the membrane. In Dictyostelium discoideum (Social amoeba), this protein is Frizzled/smoothened-like sans CRD protein D (fscD).